Here is a 466-residue protein sequence, read N- to C-terminus: 3-isopropylmalate dehydratase large subunit (466 aa).

[4Fe-4S] cluster is bound by residues C347, C407, and C410.

This sequence belongs to the aconitase/IPM isomerase family. LeuC type 1 subfamily. As to quaternary structure, heterodimer of LeuC and LeuD. [4Fe-4S] cluster is required as a cofactor.

It carries out the reaction (2R,3S)-3-isopropylmalate = (2S)-2-isopropylmalate. Its pathway is amino-acid biosynthesis; L-leucine biosynthesis; L-leucine from 3-methyl-2-oxobutanoate: step 2/4. Catalyzes the isomerization between 2-isopropylmalate and 3-isopropylmalate, via the formation of 2-isopropylmaleate. This is 3-isopropylmalate dehydratase large subunit from Shewanella loihica (strain ATCC BAA-1088 / PV-4).